A 555-amino-acid polypeptide reads, in one-letter code: CTP synthase (555 aa).

Positions 1 to 271 (MVKRGKKTKY…DDKLAELFNI (271 aa)) are amidoligase domain. Position 19 (S19) interacts with CTP. Residue S19 participates in UTP binding. ATP-binding positions include 20–25 (SLGKGL) and D77. D77 and E145 together coordinate Mg(2+). CTP contacts are provided by residues 152–154 (DIE), 192–197 (KTKPTQ), and K228. UTP contacts are provided by residues 192-197 (KTKPTQ) and K228. Positions 297–538 (RVGVVGKYVE…VHAAREQRDQ (242 aa)) constitute a Glutamine amidotransferase type-1 domain. An L-glutamine-binding site is contributed by G358. C385 serves as the catalytic Nucleophile; for glutamine hydrolysis. L-glutamine-binding positions include 386-389 (LGLQ), E409, and R466. Residues H511 and E513 contribute to the active site.

The protein belongs to the CTP synthase family. In terms of assembly, homotetramer.

The enzyme catalyses UTP + L-glutamine + ATP + H2O = CTP + L-glutamate + ADP + phosphate + 2 H(+). It catalyses the reaction L-glutamine + H2O = L-glutamate + NH4(+). The catalysed reaction is UTP + NH4(+) + ATP = CTP + ADP + phosphate + 2 H(+). It functions in the pathway pyrimidine metabolism; CTP biosynthesis via de novo pathway; CTP from UDP: step 2/2. Its activity is regulated as follows. Allosterically activated by GTP, when glutamine is the substrate; GTP has no effect on the reaction when ammonia is the substrate. The allosteric effector GTP functions by stabilizing the protein conformation that binds the tetrahedral intermediate(s) formed during glutamine hydrolysis. Inhibited by the product CTP, via allosteric rather than competitive inhibition. Its function is as follows. Catalyzes the ATP-dependent amination of UTP to CTP with either L-glutamine or ammonia as the source of nitrogen. Regulates intracellular CTP levels through interactions with the four ribonucleotide triphosphates. The chain is CTP synthase from Anaeromyxobacter sp. (strain Fw109-5).